The sequence spans 101 residues: Small ribosomal subunit protein uS10 (101 aa).

This sequence belongs to the universal ribosomal protein uS10 family. In terms of assembly, part of the 30S ribosomal subunit.

Functionally, involved in the binding of tRNA to the ribosomes. This is Small ribosomal subunit protein uS10 from Corynebacterium aurimucosum (strain ATCC 700975 / DSM 44827 / CIP 107346 / CN-1) (Corynebacterium nigricans).